The primary structure comprises 265 residues: Ribosomal RNA small subunit methyltransferase A (265 aa).

Residues H17, L19, G44, E65, D90, and N112 each coordinate S-adenosyl-L-methionine.

It belongs to the class I-like SAM-binding methyltransferase superfamily. rRNA adenine N(6)-methyltransferase family. RsmA subfamily.

The protein localises to the cytoplasm. It catalyses the reaction adenosine(1518)/adenosine(1519) in 16S rRNA + 4 S-adenosyl-L-methionine = N(6)-dimethyladenosine(1518)/N(6)-dimethyladenosine(1519) in 16S rRNA + 4 S-adenosyl-L-homocysteine + 4 H(+). Specifically dimethylates two adjacent adenosines (A1518 and A1519) in the loop of a conserved hairpin near the 3'-end of 16S rRNA in the 30S particle. May play a critical role in biogenesis of 30S subunits. In Xylella fastidiosa (strain Temecula1 / ATCC 700964), this protein is Ribosomal RNA small subunit methyltransferase A.